A 217-amino-acid polypeptide reads, in one-letter code: Probable transaldolase (217 aa).

Lys85 (schiff-base intermediate with substrate) is an active-site residue.

This sequence belongs to the transaldolase family. Type 3B subfamily.

The protein resides in the cytoplasm. The catalysed reaction is D-sedoheptulose 7-phosphate + D-glyceraldehyde 3-phosphate = D-erythrose 4-phosphate + beta-D-fructose 6-phosphate. It participates in carbohydrate degradation; pentose phosphate pathway; D-glyceraldehyde 3-phosphate and beta-D-fructose 6-phosphate from D-ribose 5-phosphate and D-xylulose 5-phosphate (non-oxidative stage): step 2/3. Its function is as follows. Transaldolase is important for the balance of metabolites in the pentose-phosphate pathway. The protein is Probable transaldolase of Lachnoclostridium phytofermentans (strain ATCC 700394 / DSM 18823 / ISDg) (Clostridium phytofermentans).